The primary structure comprises 337 residues: Large ribosomal subunit protein uL3 (337 aa).

The segment at 1 to 20 (MASIHRPKRGSLAFSPRKRA) is disordered.

The protein belongs to the universal ribosomal protein uL3 family. As to quaternary structure, part of the 50S ribosomal subunit. Forms a cluster with proteins L14 and L24e.

Its function is as follows. One of the primary rRNA binding proteins, it binds directly near the 3'-end of the 23S rRNA, where it nucleates assembly of the 50S subunit. This is Large ribosomal subunit protein uL3 from Methanosarcina mazei (strain ATCC BAA-159 / DSM 3647 / Goe1 / Go1 / JCM 11833 / OCM 88) (Methanosarcina frisia).